The primary structure comprises 149 residues: Large ribosomal subunit protein bL9 (149 aa).

Belongs to the bacterial ribosomal protein bL9 family.

Functionally, binds to the 23S rRNA. The chain is Large ribosomal subunit protein bL9 from Aquifex aeolicus (strain VF5).